We begin with the raw amino-acid sequence, 614 residues long: Acetyl-coenzyme A carboxylase carboxyl transferase subunits beta/alpha (614 aa).

The acetyl-coenzyme A carboxylase carboxyl transferase subunit beta stretch occupies residues 1–250 (MTASATRQRP…QTAEFLLEHG (250 aa)). Residues 18–287 (EWLVCDGCRR…TAPVTPGDGH (270 aa)) enclose the CoA carboxyltransferase N-terminal domain. The interval 18 to 556 (EWLVCDGCRR…RAALTGALAE (539 aa)) is carboxyltransferase. Zn(2+) contacts are provided by Cys-22, Cys-25, Cys-41, and Cys-44. The C4-type zinc-finger motif lies at 22–44 (CDGCRRMIYGRRFARGGHVCPEC). The segment at 251 to 614 (VVDLISPRGQ…ADLDDARRAS (364 aa)) is acetyl-coenzyme A carboxylase carboxyl transferase subunit alpha. 2 disordered regions span residues 272–314 (ATRR…DPAR) and 577–614 (GTPAPAGGAAPAPVVPAARPPLGAGRTHADLDDARRAS). Over residues 297–307 (DSRGASHGGDG) the composition is skewed to gly residues. In terms of domain architecture, CoA carboxyltransferase C-terminal spans 311–556 (DPARLADRHP…RAALTGALAE (246 aa)). A compositionally biased stretch (low complexity) spans 579-602 (PAPAGGAAPAPVVPAARPPLGAGR). The span at 603–614 (THADLDDARRAS) shows a compositional bias: basic and acidic residues.

In the N-terminal section; belongs to the AccD/PCCB family. The protein in the C-terminal section; belongs to the AccA family. Acetyl-CoA carboxylase is a heterotetramer composed of biotin carboxyl carrier protein (AccB), biotin carboxylase (AccC) and two subunits of ACCase subunit beta/alpha. Zn(2+) is required as a cofactor.

The protein localises to the cytoplasm. It catalyses the reaction N(6)-carboxybiotinyl-L-lysyl-[protein] + acetyl-CoA = N(6)-biotinyl-L-lysyl-[protein] + malonyl-CoA. Its pathway is lipid metabolism; malonyl-CoA biosynthesis; malonyl-CoA from acetyl-CoA: step 1/1. In terms of biological role, component of the acetyl coenzyme A carboxylase (ACC) complex. Biotin carboxylase (BC) catalyzes the carboxylation of biotin on its carrier protein (BCCP) and then the CO(2) group is transferred by the transcarboxylase to acetyl-CoA to form malonyl-CoA. The sequence is that of Acetyl-coenzyme A carboxylase carboxyl transferase subunits beta/alpha (accD) from Parafrankia sp. (strain EAN1pec).